The sequence spans 281 residues: Clc-like protein 5 (281 aa).

Transmembrane regions (helical) follow at residues 13–33, 104–124, 137–157, and 184–204; these read LATLISSVISNFLIFFATITP, VLILNVISMICMSLCAAAVIF, IMLDVFAGFASLLLCVSLIVF, and YYLAGLAFVISVITVLFAALV.

Belongs to the Clc family.

The protein localises to the membrane. This chain is Clc-like protein 5 (clc-5), found in Caenorhabditis elegans.